A 197-amino-acid polypeptide reads, in one-letter code: Nucleoside triphosphate pyrophosphatase (197 aa).

The active-site Proton acceptor is the D72.

The protein belongs to the Maf family. It depends on a divalent metal cation as a cofactor.

It is found in the cytoplasm. The catalysed reaction is a ribonucleoside 5'-triphosphate + H2O = a ribonucleoside 5'-phosphate + diphosphate + H(+). It carries out the reaction a 2'-deoxyribonucleoside 5'-triphosphate + H2O = a 2'-deoxyribonucleoside 5'-phosphate + diphosphate + H(+). Nucleoside triphosphate pyrophosphatase. May have a dual role in cell division arrest and in preventing the incorporation of modified nucleotides into cellular nucleic acids. In Corynebacterium glutamicum (strain ATCC 13032 / DSM 20300 / JCM 1318 / BCRC 11384 / CCUG 27702 / LMG 3730 / NBRC 12168 / NCIMB 10025 / NRRL B-2784 / 534), this protein is Nucleoside triphosphate pyrophosphatase.